The primary structure comprises 621 residues: ATP-dependent DNA helicase Q1 (621 aa).

The region spanning 100–275 is the Helicase ATP-binding domain; the sequence is VNATMARKDI…QKILCVEKCL (176 aa). Position 113–120 (113–120) interacts with ATP; sequence MPTGGGKS. The DEVH box signature appears at 219–222; sequence DEVH. A Helicase C-terminal domain is found at 296 to 451; it reads SAEDFIENIA…EMVSYCQNIS (156 aa). C453, C471, C475, and C478 together coordinate Zn(2+). Residues K514 and K522 each carry the N6-acetyllysine modification. A phosphoserine mark is found at S597 and S602.

This sequence belongs to the helicase family. RecQ subfamily. In terms of assembly, may form homodimers or higher order oligomers. Interacts with EXO1. Interacts with MLH1. Interacts with PARP1. Mg(2+) is required as a cofactor. Mn(2+) serves as cofactor. Requires Zn(2+) as cofactor.

It is found in the nucleus. It carries out the reaction Couples ATP hydrolysis with the unwinding of duplex DNA by translocating in the 3'-5' direction.. The enzyme catalyses ATP + H2O = ADP + phosphate + H(+). It catalyses the reaction dATP + H2O = dADP + phosphate + H(+). Functionally, DNA helicase that plays a role in DNA damage repair and genome stability. Exhibits a magnesium- and ATP-dependent DNA-helicase activity that unwinds single- and double-stranded DNA in a 3'-5' direction. Plays a role in restoring regressed replication forks. Required to restart stalled replication forks induced by abortive topoisomerase 1 and 2 lesions. May play a role in the repair of DNA that is damaged by ultraviolet light or other mutagens. This Rattus norvegicus (Rat) protein is ATP-dependent DNA helicase Q1 (Recql).